Reading from the N-terminus, the 263-residue chain is CRISPR-associated protein Cas5 2 (263 aa).

Belongs to the CRISPR-associated protein Cas5 family. Subtype I-A/Apern subfamily. As to quaternary structure, part of the aCascade ribonucleoprotein complex, minimally composed of Csa2 and Cas5a, which binds crRNA. Other possible components of aCascade in strain P1 are Cas6b (SSO1437) and Csa5 (SSO1443), while SSO1399, Cas5b (SSO1400) and SSO1401 have sometimes been seen weakly associated. Csa2 is probably the major RNA-binding subunit. The Csa2-Cas5a-crRNA complex also binds target DNA homologous to crRNA, probably forming an R-loop. Purified aCascade forms a filament about 6 nm in width.

CRISPR (clustered regularly interspaced short palindromic repeat) is an adaptive immune system that provides protection against mobile genetic elements (viruses, transposable elements and conjugative plasmids). CRISPR clusters contain spacers, sequences complementary to antecedent mobile elements, and target invading nucleic acids. CRISPR clusters are transcribed and processed into CRISPR RNA (crRNA). This Saccharolobus solfataricus (strain ATCC 35092 / DSM 1617 / JCM 11322 / P2) (Sulfolobus solfataricus) protein is CRISPR-associated protein Cas5 2 (cas5b).